Reading from the N-terminus, the 787-residue chain is Endonuclease MutS2 (787 aa).

ATP is bound at residue 334–341; it reads GPNTGGKT. Positions 712–787 constitute a Smr domain; that stretch reads LDLRGKRYEE…GNGATIVTFK (76 aa).

This sequence belongs to the DNA mismatch repair MutS family. MutS2 subfamily. Homodimer. Binds to stalled ribosomes, contacting rRNA.

Endonuclease that is involved in the suppression of homologous recombination and thus may have a key role in the control of bacterial genetic diversity. In terms of biological role, acts as a ribosome collision sensor, splitting the ribosome into its 2 subunits. Detects stalled/collided 70S ribosomes which it binds and splits by an ATP-hydrolysis driven conformational change. Acts upstream of the ribosome quality control system (RQC), a ribosome-associated complex that mediates the extraction of incompletely synthesized nascent chains from stalled ribosomes and their subsequent degradation. Probably generates substrates for RQC. The protein is Endonuclease MutS2 of Latilactobacillus sakei subsp. sakei (strain 23K) (Lactobacillus sakei subsp. sakei).